Reading from the N-terminus, the 311-residue chain is Glutamyl-Q tRNA(Asp) synthetase (311 aa).

L-glutamate contacts are provided by residues 14–18 (RYAPS) and Glu-50. Residues 17-27 (PSPSGDLHLGN) carry the 'HIGH' region motif. Zn(2+)-binding residues include Cys-104, Cys-106, Tyr-125, and Cys-129. Residues Tyr-186 and Arg-204 each coordinate L-glutamate. A 'KMSKS' region motif is present at residues 242–246 (RLAKR). Lys-245 is a binding site for ATP.

The protein belongs to the class-I aminoacyl-tRNA synthetase family. GluQ subfamily. The cofactor is Zn(2+).

Its function is as follows. Catalyzes the tRNA-independent activation of glutamate in presence of ATP and the subsequent transfer of glutamate onto a tRNA(Asp). Glutamate is transferred on the 2-amino-5-(4,5-dihydroxy-2-cyclopenten-1-yl) moiety of the queuosine in the wobble position of the QUC anticodon. This chain is Glutamyl-Q tRNA(Asp) synthetase, found in Nocardia farcinica (strain IFM 10152).